A 74-amino-acid chain; its full sequence is Large ribosomal subunit protein uL30 (74 aa).

The protein belongs to the universal ribosomal protein uL30 family. As to quaternary structure, part of the 50S ribosomal subunit.

The polypeptide is Large ribosomal subunit protein uL30 (Koribacter versatilis (strain Ellin345)).